The following is a 34-amino-acid chain: Photosystem II reaction center protein M (34 aa).

A helical membrane pass occupies residues 7–27; it reads GFVASLMFILVPAIFLIVLYI.

This sequence belongs to the PsbM family. As to quaternary structure, PSII is composed of 1 copy each of membrane proteins PsbA, PsbB, PsbC, PsbD, PsbE, PsbF, PsbH, PsbI, PsbJ, PsbK, PsbL, PsbM, PsbT, PsbX, PsbY, PsbZ, Psb30/Ycf12, peripheral proteins PsbO, CyanoQ (PsbQ), PsbU, PsbV and a large number of cofactors. It forms dimeric complexes.

It is found in the cellular thylakoid membrane. Its function is as follows. One of the components of the core complex of photosystem II (PSII). PSII is a light-driven water:plastoquinone oxidoreductase that uses light energy to abstract electrons from H(2)O, generating O(2) and a proton gradient subsequently used for ATP formation. It consists of a core antenna complex that captures photons, and an electron transfer chain that converts photonic excitation into a charge separation. This subunit is found at the monomer-monomer interface. The chain is Photosystem II reaction center protein M from Synechococcus sp. (strain CC9605).